The sequence spans 569 residues: Proline--tRNA ligase (569 aa).

This sequence belongs to the class-II aminoacyl-tRNA synthetase family. ProS type 1 subfamily. As to quaternary structure, homodimer.

It localises to the cytoplasm. It carries out the reaction tRNA(Pro) + L-proline + ATP = L-prolyl-tRNA(Pro) + AMP + diphosphate. In terms of biological role, catalyzes the attachment of proline to tRNA(Pro) in a two-step reaction: proline is first activated by ATP to form Pro-AMP and then transferred to the acceptor end of tRNA(Pro). As ProRS can inadvertently accommodate and process non-cognate amino acids such as alanine and cysteine, to avoid such errors it has two additional distinct editing activities against alanine. One activity is designated as 'pretransfer' editing and involves the tRNA(Pro)-independent hydrolysis of activated Ala-AMP. The other activity is designated 'posttransfer' editing and involves deacylation of mischarged Ala-tRNA(Pro). The misacylated Cys-tRNA(Pro) is not edited by ProRS. This is Proline--tRNA ligase from Lactiplantibacillus plantarum (strain ATCC BAA-793 / NCIMB 8826 / WCFS1) (Lactobacillus plantarum).